We begin with the raw amino-acid sequence, 140 residues long: Ribonuclease P protein subunit p20 (140 aa).

This sequence belongs to the histone-like Alba family. In terms of assembly, component of nuclear RNase P and RNase MRP complexes. RNase P consists of a catalytic RNA moiety and 10 different protein chains; POP1, POP4, POP5, POP7, RPP14, RPP21, RPP25, RPP30, RPP38 and RPP40. Within the RNase P complex, POP1, POP7 and RPP25 form the 'finger' subcomplex, POP5, RPP14, RPP40 and homodimeric RPP30 form the 'palm' subcomplex, and RPP21, POP4 and RPP38 form the 'wrist' subcomplex. All subunits of the RNase P complex interact with the catalytic RNA. Several subunits of RNase P are also part of the RNase MRP complex. RNase MRP consists of a catalytic RNA moiety and about 8 protein subunits; POP1, POP7, RPP25, RPP30, RPP38, RPP40 and possibly also POP4 and POP5. Interacts with SMN1. POP7 forms a heterodimer with RPP25 that binds to the P3 stem loop of the catalytic RNA.

Its subcellular location is the nucleus. It is found in the nucleolus. It localises to the cytoplasm. The protein resides in the cytoplasmic granule. Functionally, component of ribonuclease P, a ribonucleoprotein complex that generates mature tRNA molecules by cleaving their 5'-ends. Also a component of the MRP ribonuclease complex, which cleaves pre-rRNA sequences. This chain is Ribonuclease P protein subunit p20 (POP7), found in Homo sapiens (Human).